Reading from the N-terminus, the 295-residue chain is Caffeine dehydrogenase subunit beta (295 aa).

Residues 1-178 (MKPTAFDYIR…CEIRIPVPSQ (178 aa)) form the FAD-binding PCMH-type domain. Residues 32–36 (AGGQS) and 111–115 (TLGGN) each bind FAD.

In terms of assembly, heterotrimer composed of an alpha (CdhA), a beta (CdhB) and a gamma (CdhC) subunit.

The catalysed reaction is caffeine + a ubiquinone + H2O = 1,3,7-trimethylurate + a ubiquinol. It catalyses the reaction ubiquinone-0 + caffeine + H2O = ubiquinol-0 + 1,3,7-trimethylurate. It carries out the reaction theobromine + a ubiquinone + H2O = 3,7-dimethylurate + a ubiquinol. Its function is as follows. Component of the caffeine dehydrogenase complex that catalyzes the hydrolytical oxidation of 1,3,7-trimethylxanthine (caffeine) by incorporation of an oxygen atom originating from a water molecule into position C-8 to produce 1,3,7-trimethyluric acid (TMU). Coenzyme Q0 (ubiquinone-0) is the preferred electron acceptor and, to a lesser extent, coenzyme Q2 (ubiquinone-2) can also be used, but oxygen and NAD(P)(+) cannot. Is involved in a caffeine degradation pathway that allows Pseudomonas sp. strain CBB1 to grow on caffeine as the sole carbon and nitrogen source. Is also active with theobromine as substrate, but shows a very poor activity with theophylline and is not active with xanthine, 3-methylxanthine, 7-methylxanthine, TMU, and 3,7-dimethylurate. In Pseudomonas sp. (strain CBB1), this protein is Caffeine dehydrogenase subunit beta.